The chain runs to 394 residues: Guanine nucleotide-binding protein G(s) subunit alpha (394 aa).

The interval 1-25 (MGCLGDSKTEDQRNEEKAQREANKK) is disordered. Residue G2 is the site of N-palmitoyl glycine attachment. Residue C3 is the site of S-palmitoyl cysteine attachment. Positions 7–25 (SKTEDQRNEEKAQREANKK) are enriched in basic and acidic residues. Residues 39-394 (ATHRLLLLGA…RMHLRQYELL (356 aa)) enclose the G-alpha domain. The tract at residues 42-55 (RLLLLGAGESGKST) is G1 motif. 47–55 (GAGESGKST) lines the GTP pocket. Mg(2+) is bound at residue S54. A disordered region spans residues 68–90 (FNGEGGEEDPQAARSNSDGEKAT). The interval 196–204 (DLLRCRVLT) is G2 motif. Residues 197-204 (LLRCRVLT), 223-227 (DVGGQ), 292-295 (NKQD), and A366 contribute to the GTP site. Position 204 (T204) interacts with Mg(2+). The segment at 219–228 (FHMFDVGGQR) is G3 motif. The segment at 288–295 (ILFLNKQD) is G4 motif. A G5 motif region spans residues 364-369 (TCAVDT).

Belongs to the G-alpha family. G(s) subfamily. Heterotrimeric G proteins are composed of 3 units; alpha, beta and gamma. The alpha chain contains the guanine nucleotide binding site. Interacts with CRY1; the interaction may block GPCR-mediated regulation of cAMP concentrations. Interacts with ADCY6 and stimulates its adenylyl cyclase activity. Interacts with ADCY2 and ADCY5. Stimulates the ADCY5 adenylyl cyclase activity. Interaction with SASH1.

It is found in the cell membrane. Its function is as follows. Guanine nucleotide-binding proteins (G proteins) function as transducers in numerous signaling pathways controlled by G protein-coupled receptors (GPCRs). Signaling involves the activation of adenylyl cyclases, resulting in increased levels of the signaling molecule cAMP. GNAS functions downstream of several GPCRs, including beta-adrenergic receptors. Stimulates the Ras signaling pathway via RAPGEF2. The sequence is that of Guanine nucleotide-binding protein G(s) subunit alpha (GNAS) from Cricetulus longicaudatus (Long-tailed dwarf hamster).